A 351-amino-acid polypeptide reads, in one-letter code: UDP-3-O-acylglucosamine N-acyltransferase (351 aa).

Residue histidine 240 is the Proton acceptor of the active site.

This sequence belongs to the transferase hexapeptide repeat family. LpxD subfamily. Homotrimer.

The catalysed reaction is a UDP-3-O-[(3R)-3-hydroxyacyl]-alpha-D-glucosamine + a (3R)-hydroxyacyl-[ACP] = a UDP-2-N,3-O-bis[(3R)-3-hydroxyacyl]-alpha-D-glucosamine + holo-[ACP] + H(+). Its pathway is bacterial outer membrane biogenesis; LPS lipid A biosynthesis. Catalyzes the N-acylation of UDP-3-O-acylglucosamine using 3-hydroxyacyl-ACP as the acyl donor. Is involved in the biosynthesis of lipid A, a phosphorylated glycolipid that anchors the lipopolysaccharide to the outer membrane of the cell. The protein is UDP-3-O-acylglucosamine N-acyltransferase of Ectopseudomonas mendocina (strain ymp) (Pseudomonas mendocina).